A 316-amino-acid polypeptide reads, in one-letter code: Transaldolase (316 aa).

Lys131 (schiff-base intermediate with substrate) is an active-site residue.

The protein belongs to the transaldolase family. Type 1 subfamily. As to quaternary structure, homodimer.

It is found in the cytoplasm. The catalysed reaction is D-sedoheptulose 7-phosphate + D-glyceraldehyde 3-phosphate = D-erythrose 4-phosphate + beta-D-fructose 6-phosphate. Its pathway is carbohydrate degradation; pentose phosphate pathway; D-glyceraldehyde 3-phosphate and beta-D-fructose 6-phosphate from D-ribose 5-phosphate and D-xylulose 5-phosphate (non-oxidative stage): step 2/3. In terms of biological role, transaldolase is important for the balance of metabolites in the pentose-phosphate pathway. The protein is Transaldolase of Glaesserella parasuis serovar 5 (strain SH0165) (Haemophilus parasuis).